We begin with the raw amino-acid sequence, 201 residues long: GTP cyclohydrolase 1 (201 aa).

The disordered stretch occupies residues 1-20 (MDATVKKMSPETSRPSREEA). Zn(2+)-binding residues include Cys-91, His-94, and Cys-162.

This sequence belongs to the GTP cyclohydrolase I family. Homomer.

It catalyses the reaction GTP + H2O = 7,8-dihydroneopterin 3'-triphosphate + formate + H(+). Its pathway is cofactor biosynthesis; 7,8-dihydroneopterin triphosphate biosynthesis; 7,8-dihydroneopterin triphosphate from GTP: step 1/1. The sequence is that of GTP cyclohydrolase 1 from Allorhizobium ampelinum (strain ATCC BAA-846 / DSM 112012 / S4) (Agrobacterium vitis (strain S4)).